The chain runs to 158 residues: Large ribosomal subunit protein eL20z (158 aa).

Belongs to the eukaryotic ribosomal protein eL20 family.

The protein is Large ribosomal subunit protein eL20z (RPL18A1) of Arabidopsis thaliana (Mouse-ear cress).